The primary structure comprises 202 residues: MTNTLDVLKARASVKEYDTNAPISKEELTELLDLATKAPSAWNLQHWHFTVFHSDESKAELLPVAYNQKQIVESSAVVAILGDLKANENGEEVYAELASQGYITDEIKQTLLGQINGAYQSEQFARDSAFLNASLAAMQLMIAAKAKGYDTCAIGGFNKEQFQKQFDISERYVPVMLISIGKAVKPAHQSNRLPLSKVSTWL.

FMN-binding positions include 11–13, 68–70, 155–156, and Arg-192; these read RAS, QKQ, and GG.

It belongs to the nitroreductase family. FMN is required as a cofactor.

It localises to the cytoplasm. Its function is as follows. Putative nitroreductase that may contribute to the degradation of aromatic compounds. The sequence is that of Putative NAD(P)H nitroreductase YodC (yodC) from Bacillus subtilis (strain 168).